The chain runs to 947 residues: Bifunctional glutamine synthetase adenylyltransferase/adenylyl-removing enzyme (947 aa).

Residues 1 to 440 (MTPLSSPLSQ…VFNELIGDDE (440 aa)) are adenylyl removase. Positions 450-947 (SEPWREVWQD…ASWRKWLVAV (498 aa)) are adenylyl transferase.

Belongs to the GlnE family. Mg(2+) serves as cofactor.

It catalyses the reaction [glutamine synthetase]-O(4)-(5'-adenylyl)-L-tyrosine + phosphate = [glutamine synthetase]-L-tyrosine + ADP. It carries out the reaction [glutamine synthetase]-L-tyrosine + ATP = [glutamine synthetase]-O(4)-(5'-adenylyl)-L-tyrosine + diphosphate. Involved in the regulation of glutamine synthetase GlnA, a key enzyme in the process to assimilate ammonia. When cellular nitrogen levels are high, the C-terminal adenylyl transferase (AT) inactivates GlnA by covalent transfer of an adenylyl group from ATP to specific tyrosine residue of GlnA, thus reducing its activity. Conversely, when nitrogen levels are low, the N-terminal adenylyl removase (AR) activates GlnA by removing the adenylyl group by phosphorolysis, increasing its activity. The regulatory region of GlnE binds the signal transduction protein PII (GlnB) which indicates the nitrogen status of the cell. The protein is Bifunctional glutamine synthetase adenylyltransferase/adenylyl-removing enzyme of Salmonella paratyphi B (strain ATCC BAA-1250 / SPB7).